A 305-amino-acid chain; its full sequence is Aquaporin-1 (305 aa).

A disordered region spans residues 1-34; that stretch reads MSSNDSNDTDKQHTRLDPTGVDDAYIPPEQPETK. The Cytoplasmic segment spans residues 1–48; sequence MSSNDSNDTDKQHTRLDPTGVDDAYIPPEQPETKHHRFKISRDTLRDH. A helical transmembrane segment spans residues 49–69; it reads FIAAVGEFCGTFMFLWCAYVI. Topologically, residues 70–91 are extracellular; the sequence is CNVANHDVALVAAPDGSHPGQL. Residues 92–112 traverse the membrane as a helical segment; the sequence is IMIAIGFGFSVMFSIWCFAGV. Topologically, residues 113-136 are cytoplasmic; the sequence is SGGALNPAMSLSLCLARAVSPTRC. The NPA 1 motif lies at 118–120; the sequence is NPA. The helical transmembrane segment at 137 to 157 threads the bilayer; sequence VVMWVSQIVAGMAAGGAASAM. At 158 to 176 the chain is on the extracellular side; the sequence is TPGEVLFANSLGLGCSRTR. A helical transmembrane segment spans residues 177–197; that stretch reads GLFLEMFGTAILCLTVLMTAV. Topologically, residues 198–203 are cytoplasmic; it reads EKRETN. The helical transmembrane segment at 204 to 224 threads the bilayer; the sequence is FMAALPIGISLFIAHVALTAY. Topologically, residues 225–248 are extracellular; that stretch reads TGTGVNPARSLGAAVAARYFPHYH. The NPA 2 signature appears at 230–232; sequence NPA. The helical transmembrane segment at 249-269 threads the bilayer; the sequence is WIYWIGTLLGSILAWSVWQLL. The Cytoplasmic portion of the chain corresponds to 270–305; it reads QILDYTTYVTAEKAASTKEKAQKKGETSSSSAVAEV. Positions 286–295 are enriched in basic and acidic residues; the sequence is TKEKAQKKGE. Residues 286–305 form a disordered region; sequence TKEKAQKKGETSSSSAVAEV. Positions 296 to 305 are enriched in polar residues; it reads TSSSSAVAEV.

The protein belongs to the MIP/aquaporin (TC 1.A.8) family.

The protein localises to the endoplasmic reticulum membrane. Its subcellular location is the cell membrane. Water channel required to facilitate the transport of water across membranes. Involved in sporulation, freeze tolerance and osmotolerance. Is non-functional in most laboratory strains. This chain is Aquaporin-1 (AQY1), found in Saccharomyces cerevisiae (strain ATCC 204508 / S288c) (Baker's yeast).